Reading from the N-terminus, the 340-residue chain is Ribosomal RNA large subunit methyltransferase F (340 aa).

The segment at 1–36 (MNAPRTPKPARKKPDSATPAKPVEPRKEASLHPRNR) is disordered.

Belongs to the methyltransferase superfamily. METTL16/RlmF family.

The protein resides in the cytoplasm. It catalyses the reaction adenosine(1618) in 23S rRNA + S-adenosyl-L-methionine = N(6)-methyladenosine(1618) in 23S rRNA + S-adenosyl-L-homocysteine + H(+). Functionally, specifically methylates the adenine in position 1618 of 23S rRNA. The sequence is that of Ribosomal RNA large subunit methyltransferase F from Pseudomonas fluorescens (strain Pf0-1).